Consider the following 608-residue polypeptide: Fatty acid amide hydrolase (608 aa).

Catalysis depends on charge relay system residues K206 and S282. 303-306 provides a ligand contact to substrate; the sequence is GGGS. Catalysis depends on S306, which acts as the Acyl-ester intermediate.

This sequence belongs to the amidase family. Forms homodimers.

The protein localises to the endoplasmic reticulum membrane. It is found in the cell membrane. It carries out the reaction N-(9Z,12Z-octadecadienoyl)-ethanolamine + H2O = ethanolamine + (9Z,12Z)-octadecadienoate. The enzyme catalyses N-hexadecanoylethanolamine + H2O = ethanolamine + hexadecanoate. It catalyses the reaction N-dodecanoylethanolamine + H2O = dodecanoate + ethanolamine. With respect to regulation, inhibited by methyl arachidonyl fluorophosphonate (MAFP). In terms of biological role, catalyzes the hydrolysis of bioactive endogenous fatty acid amides to their corresponding acids. The hydrolysis of endogenous amidated lipids terminates their participation as lipid mediators in various signaling systems. Converts a wide range of N-acylethanolamines (NAEs) to their corresponding free fatty acids and ethanolamine. In Oryza sativa subsp. japonica (Rice), this protein is Fatty acid amide hydrolase.